A 407-amino-acid chain; its full sequence is Aminomethyltransferase, mitochondrial (407 aa).

The N-terminal 29 residues, 1–29 (MRGGLWQVGQSITRRLGQSDKKTIVRRWY), are a transit peptide targeting the mitochondrion. Glutamate 234, arginine 265, and tyrosine 403 together coordinate substrate.

It belongs to the GcvT family. As to quaternary structure, the glycine cleavage system is composed of four proteins: P, T, L and H.

The protein resides in the mitochondrion. The enzyme catalyses N(6)-[(R)-S(8)-aminomethyldihydrolipoyl]-L-lysyl-[protein] + (6S)-5,6,7,8-tetrahydrofolate = N(6)-[(R)-dihydrolipoyl]-L-lysyl-[protein] + (6R)-5,10-methylene-5,6,7,8-tetrahydrofolate + NH4(+). The glycine cleavage system catalyzes the degradation of glycine. In Flaveria trinervia (Clustered yellowtops), this protein is Aminomethyltransferase, mitochondrial (GDCST).